Reading from the N-terminus, the 205-residue chain is Holliday junction branch migration complex subunit RuvA (205 aa).

The domain I stretch occupies residues Met1–Ile64. Residues Thr65–Glu143 are domain II. A flexible linker region spans residues Arg144 to Pro156. The segment at Val157–Leu205 is domain III.

This sequence belongs to the RuvA family. As to quaternary structure, homotetramer. Forms an RuvA(8)-RuvB(12)-Holliday junction (HJ) complex. HJ DNA is sandwiched between 2 RuvA tetramers; dsDNA enters through RuvA and exits via RuvB. An RuvB hexamer assembles on each DNA strand where it exits the tetramer. Each RuvB hexamer is contacted by two RuvA subunits (via domain III) on 2 adjacent RuvB subunits; this complex drives branch migration. In the full resolvosome a probable DNA-RuvA(4)-RuvB(12)-RuvC(2) complex forms which resolves the HJ.

The protein resides in the cytoplasm. Its function is as follows. The RuvA-RuvB-RuvC complex processes Holliday junction (HJ) DNA during genetic recombination and DNA repair, while the RuvA-RuvB complex plays an important role in the rescue of blocked DNA replication forks via replication fork reversal (RFR). RuvA specifically binds to HJ cruciform DNA, conferring on it an open structure. The RuvB hexamer acts as an ATP-dependent pump, pulling dsDNA into and through the RuvAB complex. HJ branch migration allows RuvC to scan DNA until it finds its consensus sequence, where it cleaves and resolves the cruciform DNA. This Shewanella loihica (strain ATCC BAA-1088 / PV-4) protein is Holliday junction branch migration complex subunit RuvA.